A 1445-amino-acid polypeptide reads, in one-letter code: Tensin-3 (1445 aa).

Residues 1–170 (MEEGHGLDLT…QFLSGLLSGS (170 aa)) form the Phosphatase tensin-type domain. Positions 175 to 301 (ASPLFLHFVI…GKVELVFSAT (127 aa)) constitute a C2 tensin-type domain. At Thr323 the chain carries Phosphothreonine. Ser332 and Ser361 each carry phosphoserine. Residues 358–421 (RKKSSSDPGI…GTRRGLSAQE (64 aa)) form a disordered region. A compositionally biased stretch (polar residues) spans 386–400 (TLSVSSDSGHSTASA). Phosphoserine is present on residues Ser440 and Ser516. Residues 538–568 (VPDLGLGMDGPYERERTFGSREPKQPQPLLR) are disordered. Over residues 548-561 (PYERERTFGSREPK) the composition is skewed to basic and acidic residues. Position 571 is a phosphoserine (Ser571). Disordered regions lie at residues 618 to 695 (DNPG…TLDI) and 717 to 769 (PTHM…QPLG). Thr632 carries the phosphothreonine modification. Residues Ser649, Ser660, Ser687, and Ser690 each carry the phosphoserine modification. Positions 723–733 (LGSQANGSVSP) are enriched in polar residues. Ser735 and Ser776 each carry phosphoserine. Tyr780 bears the Phosphotyrosine mark. Residues Ser811, Ser866, and Ser901 each carry the phosphoserine modification. 2 disordered regions span residues 859 to 981 (ALRH…TRKD) and 1076 to 1127 (GHSS…PHSG). Residues 864-873 (PFSPPEPPLS) show a composition bias toward pro residues. Residues 914-935 (ASSTPSFQQAFASSCTISSNGP) show a composition bias toward polar residues. A compositionally biased stretch (basic and acidic residues) spans 1099–1109 (PEKKRASEGDR). Positions 1110–1127 (SLGSVSPSSSGFSSPHSG) are enriched in low complexity. Phosphoserine is present on residues Ser1149 and Ser1154. Residues 1172–1282 (WYKADISREQ…ALPCKLLIPE (111 aa)) enclose the SH2 domain. 2 positions are modified to phosphoserine: Ser1293 and Ser1441. Residues 1310 to 1444 (ACNVWYLNSV…SKVMIGSPKK (135 aa)) enclose the PTB domain.

It belongs to the PTEN phosphatase protein family. Interacts with EGFR; EGF promotes the interaction with EGFR. Interacts with PTK2/FAK1 and BCAR1. Tyrosine phosphorylation is critical for these interactions. Interacts with Rho GTPase-activating protein DLC1 and with the regulatory p85 subunit of the PI3K kinase complex; in resting cells, interacts (via C2 tensin-type domain) with DLC1 but, following growth factor stimulation, TNS3 is phosphorylated which leads to weakened interaction with DLC1 and enhanced interaction (via C2 tensin-type domain) with p85 while DLC1 interaction with PTEN increases. Interacts (when phosphorylated on the SH2 domain) with integrins ITGB1, ITGB3 and ITGB5 and with scaffolding protein PEAK1 (phosphorylated on 'Tyr-635'); mediates the association of PEAK1 with ITGB1, ITGB3 and ITGB5. Interacts (via N-terminus) with DOCK5 (via N-terminus); the interaction increases DOCK5 guanine nucleotide exchange activity towards Rac. Interacts with receptor tyrosine kinase MET. Post-translationally, phosphorylated on Ser/Thr and Tyr residues. Phosphorylated on Thr-323 in the C2-type tensin domain following EGF stimulation which changes its binding preference from DLC1 to the p85 regulatory subunit of the PI3K kinase complex. EGF induces tyrosine phosphorylation in a time- and dose-dependent manner. Phosphorylation of the SH2 domain enhances interaction with PEAK1. Expressed in umbilical vein endothelial cells, epithelial cells, and fibroblasts cells (at protein level). Highly expressed in thyroid, kidney and placenta. Low expression in heart, skeletal muscle, spleen, liver, and lung. Expressed at higher levels in tonsil-derived mesenchymal stem cells (MSCs) than in adipose tissue-derived MSCs or bone marrow-derived MSCs. Expressed in tumor endothelial cells. Expression seems to be down-regulated in thyroid tumor tissues and in anaplastic carcinomas.

The protein resides in the cell junction. Its subcellular location is the focal adhesion. It localises to the cell projection. It is found in the podosome. Its function is as follows. May act as a protein phosphatase and/or a lipid phosphatase. Involved in the dissociation of the integrin-tensin-actin complex. EGF activates TNS4 and down-regulates TNS3 which results in capping the tail of ITGB1. Increases DOCK5 guanine nucleotide exchange activity towards Rac and plays a role in osteoclast podosome organization. Enhances RHOA activation in the presence of DLC1. Required for growth factor-induced epithelial cell migration; growth factor stimulation induces TNS3 phosphorylation which changes its binding preference from DLC1 to the p85 regulatory subunit of the PI3K kinase complex, displacing PI3K inhibitor PTEN and resulting in translocation of the TNS3-p85 complex to the leading edge of migrating cells to promote RAC1 activation. Meanwhile, PTEN switches binding preference from p85 to DLC1 and the PTEN-DLC1 complex translocates to the posterior of migrating cells to activate RHOA. Acts as an adapter protein by bridging the association of scaffolding protein PEAK1 with integrins ITGB1, ITGB3 and ITGB5 which contributes to the promotion of cell migration. Controls tonsil-derived mesenchymal stem cell proliferation and differentiation by regulating the activity of integrin ITGB1. In Homo sapiens (Human), this protein is Tensin-3 (TNS3).